The following is a 259-amino-acid chain: Putative electron transfer flavoprotein subunit YgcR (259 aa).

It belongs to the ETF beta-subunit/FixA family. As to quaternary structure, ygcQ and YgcR form a heterodimer.

May play a role in a redox process. This is Putative electron transfer flavoprotein subunit YgcR (ygcR) from Escherichia coli (strain K12).